The chain runs to 930 residues: Progesterone receptor (930 aa).

Positions 1 to 11 are enriched in basic and acidic residues; sequence MTELKAKEPRA. Disordered regions lie at residues 1 to 133 and 148 to 260; these read MTEL…ASPA and LPED…SGAA. The tract at residues 1–165 is AF3; mediates transcriptional activation; it reads MTELKAKEPR…PATKGVLAPL (165 aa). A modulating, Pro-Rich region spans residues 1 to 565; sequence MTELKAKEPR…PQYSFESLPQ (565 aa). Lysine 7 is covalently cross-linked (Glycyl lysine isopeptide (Lys-Gly) (interchain with G-Cter in SUMO)). At serine 20 the chain carries Phosphoserine. The segment covering 38 to 49 has biased composition (polar residues); sequence QGSQTSEASSVV. An LXXL motif 1 motif is present at residues 56–60; sequence LDGLL. Serine 82 is subject to Phosphoserine. Positions 116–120 match the LXXL motif 2 motif; the sequence is LDTLL. A Phosphoserine modification is found at serine 131. The mediates transcriptional transrepression stretch occupies residues 166 to 304; that stretch reads MSRPEDKAGD…LATSVVDFIH (139 aa). Positions 184–188 match the Nuclear localization signal motif; sequence KVLPR. Positions 187-204 are enriched in low complexity; it reads PRGLSPSRQLLLPSSGSP. 2 positions are modified to phosphoserine: serine 191 and serine 212. Position 293 is a phosphoserine; by MAPK1 (serine 293). Residues 334 to 356 form a disordered region; the sequence is AASPFVPQRGSPSASSTPVAGGD. Serine 344 is subject to Phosphoserine; by MAPK. A Glycyl lysine isopeptide (Lys-Gly) (interchain with G-Cter in SUMO); alternate cross-link involves residue lysine 387. Residue lysine 387 forms a Glycyl lysine isopeptide (Lys-Gly) (interchain with G-Cter in ubiquitin); alternate linkage. Serine 399 bears the Phosphoserine; by CDK2 mark. Positions 415–454 are disordered; sequence DFQLAAPPPPSLPPRVPSSRPGEAAVAASPGSASVSSSSS. The segment covering 420 to 430 has biased composition (pro residues); it reads APPPPSLPPRV. Residues 431-454 are compositionally biased toward low complexity; the sequence is PSSRPGEAAVAASPGSASVSSSSS. Residues 457-547 are AF1; mediates transcriptional activation; sequence STLECILYKA…VYTPYLNYLR (91 aa). Lysine 532 participates in a covalent cross-link: Glycyl lysine isopeptide (Lys-Gly) (interchain with G-Cter in SUMO). Positions 566–640 form a DNA-binding region, nuclear receptor; the sequence is KICLICGDEA…AGMVLGGRKF (75 aa). 2 consecutive NR C4-type zinc fingers follow at residues 568–588 and 604–628; these read CLIC…CGSC and CAGR…LRKC. Serine 673 bears the Phosphoserine mark. An NR LBD domain is found at 676-910; that stretch reads QEIQLIPPLI…EFPEMMSEVI (235 aa). The AF2; mediates transcriptional activation stretch occupies residues 684–930; that stretch reads LINLLMSIEP…MVKPLLFHKK (247 aa). Residue arginine 763 coordinates progesterone.

This sequence belongs to the nuclear hormone receptor family. NR3 subfamily. Interacts with SMARD1 and UNC45A. Interacts with CUEDC2; the interaction promotes ubiquitination, decreases sumoylation, and represses transcriptional activity. Interacts with PIAS3; the interaction promotes sumoylation of PR in a hormone-dependent manner, inhibits DNA-binding, and alters nuclear export. Interacts with SP1; the interaction requires ligand-induced phosphorylation on Ser-344 by ERK1/2-MAPK. Interacts with PRMT2. Interacts with NCOA2 and NCOA1. Interacts with KLF9. Interacts with GTF2B. Post-translationally, phosphorylated on multiple serine sites. Several of these sites are hormone-dependent. Phosphorylation on Ser-293 is highly hormone-dependent and modulates ubiquitination and sumoylation on Lys-387. Phosphorylation on Ser-102 and Ser-344 also requires induction by hormone. Basal phosphorylation on Ser-82, Ser-191 and Ser-399 is increased in response to progesterone and can be phosphorylated in vitro by the CDK2-A1 complex. Increased levels of phosphorylation on Ser-399 also in the presence of EGF, heregulin, IGF, PMA and FBS. Phosphorylation at this site by CDK2 is ligand-independent, and increases nuclear translocation and transcriptional activity. Phosphorylation at Ser-293, but not at Ser-191, is impaired during the G(2)/M phase of the cell cycle. Phosphorylation on Ser-344 by ERK1/2 MAPK is required for interaction with SP1. In terms of processing, sumoylation is hormone-dependent and represses transcriptional activity. Sumoylation on all three sites is enhanced by PIAS3. Desumoylated by SENP1. Sumoylation on Lys-387, the main site of sumoylation, is repressed by ubiquitination on the same site, and modulated by phosphorylation at Ser-293. Ubiquitination is hormone-dependent and represses sumoylation on the same site. Promoted by MAPK-mediated phosphorylation on Ser-293. Ubiquitinated by UBR5, leading to its degradation: UBR5 specifically recognizes and binds ligand-bound PGR when it is not associated with coactivators (NCOAs). In presence of NCOAs, the UBR5-degron is not accessible, preventing its ubiquitination and degradation. Post-translationally, palmitoylated by ZDHHC7 and ZDHHC21. Palmitoylation is required for plasma membrane targeting and for rapid intracellular signaling via ERK and AKT kinases and cAMP generation.

It is found in the nucleus. It localises to the cytoplasm. Functionally, the steroid hormones and their receptors are involved in the regulation of eukaryotic gene expression and affect cellular proliferation and differentiation in target tissues. Transcriptional activator of several progesteron-dependent promoters in a variety of cell types. Involved in activation of SRC-dependent MAPK signaling on hormone stimulation. This is Progesterone receptor (PGR) from Oryctolagus cuniculus (Rabbit).